The chain runs to 399 residues: Nitric oxide reductase (399 aa).

The tract at residues 32–221 (HRGTTYNAYL…DEIQKINLAI (190 aa)) is zinc metallo-hydrolase. Fe cation-binding residues include H81, E83, D85, H148, D167, and H228. Residues 255 to 394 (AVIAYDTMWL…RCYELGRKIA (140 aa)) form the Flavodoxin-like domain.

The protein in the N-terminal section; belongs to the zinc metallo-hydrolase group 3 family. Homodimer. FMN is required as a cofactor. The cofactor is Fe cation.

Has nitric oxide reductase activity in combination with Hrb; probably involved in nitrosative stress protection. The sequence is that of Nitric oxide reductase (fprA) from Moorella thermoacetica (strain ATCC 39073 / JCM 9320).